Consider the following 334-residue polypeptide: ABC transporter L-arabinose-binding periplasmic protein (334 aa).

The signal sequence occupies residues 1 to 30 (MNRTIRRHTLRALLAALCIAPLGMQGAARA).

Belongs to the bacterial solute-binding protein 2 family. In terms of assembly, the complex is composed of two ATP-binding proteins (AraG), two transmembrane proteins (AraH) and a solute-binding protein (AraF).

It is found in the periplasm. Its function is as follows. Part of the ABC transporter complex AraFGH involved in L-arabinose import. Binds with high affinity to L-arabinose. The protein is ABC transporter L-arabinose-binding periplasmic protein (araF) of Azospirillum brasilense.